The sequence spans 568 residues: MPHVVARSGDVMSSAAPPSCTSLLGLSLSMFVAPCTLTAAPLDTPVVNAPAPTPPTPDQAYPELFQAVQSGELFDDQKHFVDFLPLRDPALINADYLAQHDHPGFDLRKFVDANFEESPPVQTDAIRQDTALREHIDLLWPKLVRSQNHVPPYSSLLSLPHPYVVPGGRFREVYYWDSYFTMLGLVKSGQTTLSRQMLDNFAYLIDTYGHIPNGNRSYYLSRSQPPFFSYMVELQAGVEGQAVYQRYLPQLQKEYAYWMQGSDDVQPGQAARHVVRLADGSVLNRYWDERDTPRPEAWLHDTRTAAEVKDRPAAEVYRDLRAGAESGWDYTSRWLADGQNLRTIRTTAIIPIDLNSLLYHLERTLAQACAQPGAACSRDYAALAQQRKQAIDAHLWNKAGYYADYDWQTRTLSDQITAAALYPLFAGLASDDHAKRTASTVRRTLVRPGGLATTAVKTGQQWDEPNGWAPLQWVAVDGLRRYGEQALARTIGERFLAQVQALFAREHKLVEKYGLETNAAGGGGGEYALQDGFGWTNGVTLMLLNLYPGKGAKAAPAKRVRKTEAAAR.

The first 39 residues, 1–39 (MPHVVARSGDVMSSAAPPSCTSLLGLSLSMFVAPCTLTA), serve as a signal peptide directing secretion. Substrate-binding positions include Arg169, 176-177 (WD), Asn213, 222-224 (RSQ), 294-296 (RPE), and Gly327. Active-site proton donor/acceptor residues include Asp329 and Glu511. Glu526 contributes to the substrate binding site.

Belongs to the glycosyl hydrolase 37 family.

It is found in the periplasm. It carries out the reaction alpha,alpha-trehalose + H2O = alpha-D-glucose + beta-D-glucose. Its function is as follows. Provides the cells with the ability to utilize trehalose at high osmolarity by splitting it into glucose molecules that can subsequently be taken up by the phosphotransferase-mediated uptake system. The protein is Periplasmic trehalase of Xanthomonas oryzae pv. oryzae (strain MAFF 311018).